The chain runs to 265 residues: Energy-coupling factor transporter transmembrane protein EcfT (265 aa).

A run of 5 helical transmembrane segments spans residues 29-49 (IILF…AILI), 73-93 (VWIL…GGTV), 110-130 (AIFI…LTLT), 143-163 (LLGP…MMSI), and 242-262 (FTWR…VIGW).

Belongs to the energy-coupling factor EcfT family. In terms of assembly, forms a stable energy-coupling factor (ECF) transporter complex composed of 2 membrane-embedded substrate-binding proteins (S component), 2 ATP-binding proteins (A component) and 2 transmembrane proteins (T component). May be able to interact with more than 1 S component at a time.

It is found in the cell membrane. In terms of biological role, transmembrane (T) component of an energy-coupling factor (ECF) ABC-transporter complex. Unlike classic ABC transporters this ECF transporter provides the energy necessary to transport a number of different substrates. This chain is Energy-coupling factor transporter transmembrane protein EcfT, found in Brevibacillus brevis (strain 47 / JCM 6285 / NBRC 100599).